A 4076-amino-acid chain; its full sequence is E3 ubiquitin-protein ligase TOM1-like (4076 aa).

Positions 225–237 (SSAAPAVSAGSTA) are enriched in low complexity. 17 disordered regions span residues 225–256 (SSAA…KNVA), 288–360 (YPDT…RDGP), 748–819 (IPAE…ILPS), 921–970 (LEAP…NKPA), 1083–1103 (SPVQ…SSGT), 1571–1646 (MALD…ITRE), 1988–2041 (PADA…KRPI), 2067–2110 (NVPA…KLAK), 2275–2295 (EGDK…IGRS), 2356–2551 (SGTA…ELDY), 2581–2634 (GDDL…LLAP), 2782–2817 (IPIP…ESTH), 2858–2955 (EKAR…QAED), 3037–3066 (EQHE…ASIL), 3105–3132 (RQLH…GAGT), 3216–3241 (KQLK…NNNG), and 3353–3444 (EEQA…QLTP). Residues 238 to 250 (KAKDKEKEKEKAT) are compositionally biased toward basic and acidic residues. The segment covering 311 to 320 (TTSSPAAPTP) has biased composition (low complexity). The segment covering 322 to 343 (RRSSTMNVSQSSRTQRVGSSEE) has biased composition (polar residues). A compositionally biased stretch (acidic residues) spans 767 to 778 (EGNDADDDSEDD). Over residues 940-950 (VKGKGKEKATD) the composition is skewed to basic and acidic residues. Residues 959-969 (ASSSSSGNNKP) show a composition bias toward polar residues. A compositionally biased stretch (polar residues) spans 1606–1620 (PGTSRETNVGASTTA). Over residues 1621–1632 (PQQLPVLPSQQP) the composition is skewed to low complexity. Residues 1633–1642 (ATESQSNTPR) show a composition bias toward polar residues. The span at 2021–2041 (VTDKDMHDAPKNPAQDLKRPI) shows a compositional bias: basic and acidic residues. Residues 2086–2096 (NEATPSPSGDE) are compositionally biased toward polar residues. Positions 2099–2110 (SESKEKEKKLAK) are enriched in basic and acidic residues. Composition is skewed to acidic residues over residues 2378 to 2387 (DLTDDREETP) and 2405 to 2450 (EFSD…DLGE). Over residues 2460-2469 (QPGVVEVLMG) the composition is skewed to low complexity. 2 stretches are compositionally biased toward acidic residues: residues 2470-2516 (ENDD…DLED) and 2523-2551 (EEGN…ELDY). A compositionally biased stretch (basic and acidic residues) spans 2587–2597 (EPIRDFDGHYI). Residues 2598 to 2622 (DDDEDGEEDDDEDEGEDDMDDDMYF) are compositionally biased toward acidic residues. 2 stretches are compositionally biased toward basic and acidic residues: residues 2788–2803 (HSRE…DTYQ) and 2858–2912 (EKAR…ERAE). Residues 2851–2929 (AIQAEKEEKA…QAAADQEANA (79 aa)) adopt a coiled-coil conformation. The span at 2913–2927 (AAAQAAAQAAADQEA) shows a compositional bias: low complexity. The span at 3037-3047 (EQHEQRRRERQ) shows a compositional bias: basic and acidic residues. Residues 3108–3117 (HAQQGGQAAS) show a composition bias toward polar residues. The stretch at 3341–3375 (PLQAIERRRKEAEEQAKKKKEAEEKAATEREAANA) forms a coiled coil. Positions 3353-3372 (EEQAKKKKEAEEKAATEREA) are enriched in basic and acidic residues. Residues 3373 to 3414 (ANAPEEQASTSTEQTPAQQEATQQPSESTPAAASGQQPAQQD) are compositionally biased toward low complexity. Over residues 3415 to 3439 (QENKELEAPKEKADEKDVQSDEKKI) the composition is skewed to basic and acidic residues. The 337-residue stretch at 3740–4076 (KADELKFGKL…TAGSDYFGFA (337 aa)) folds into the HECT domain. Residue C4043 is the Glycyl thioester intermediate of the active site.

The protein belongs to the UPL family. TOM1/PTR1 subfamily.

The protein localises to the nucleus. It catalyses the reaction S-ubiquitinyl-[E2 ubiquitin-conjugating enzyme]-L-cysteine + [acceptor protein]-L-lysine = [E2 ubiquitin-conjugating enzyme]-L-cysteine + N(6)-ubiquitinyl-[acceptor protein]-L-lysine.. It participates in protein modification; protein ubiquitination. Its function is as follows. Probable ubiquitin ligase protein, which may be involved in mRNA export. E3 ubiquitin ligase proteins mediate ubiquitination and subsequent proteasomal degradation of target proteins. Participates in mRNA export from the nucleus by regulating the transport of hnRNP proteins. In Neurospora crassa (strain ATCC 24698 / 74-OR23-1A / CBS 708.71 / DSM 1257 / FGSC 987), this protein is E3 ubiquitin-protein ligase TOM1-like.